We begin with the raw amino-acid sequence, 334 residues long: Holliday junction branch migration complex subunit RuvB (334 aa).

The interval 1-182 is large ATPase domain (RuvB-L); it reads MDERLVSSEL…FGVLSRLEYY (182 aa). ATP contacts are provided by residues Leu21, Arg22, Gly63, Lys66, Thr67, Thr68, 129–131, Arg172, Tyr182, and Arg219; that span reads EDF. A Mg(2+)-binding site is contributed by Thr67. Residues 183-253 form a small ATPAse domain (RuvB-S) region; that stretch reads TRDELSEIVI…VAVDALERLQ (71 aa). The segment at 256–334 is head domain (RuvB-H); sequence KLGLDHIDRK…HFKMEVPNHD (79 aa). 2 residues coordinate DNA: Arg311 and Arg316.

This sequence belongs to the RuvB family. As to quaternary structure, homohexamer. Forms an RuvA(8)-RuvB(12)-Holliday junction (HJ) complex. HJ DNA is sandwiched between 2 RuvA tetramers; dsDNA enters through RuvA and exits via RuvB. An RuvB hexamer assembles on each DNA strand where it exits the tetramer. Each RuvB hexamer is contacted by two RuvA subunits (via domain III) on 2 adjacent RuvB subunits; this complex drives branch migration. In the full resolvosome a probable DNA-RuvA(4)-RuvB(12)-RuvC(2) complex forms which resolves the HJ.

The protein localises to the cytoplasm. It catalyses the reaction ATP + H2O = ADP + phosphate + H(+). In terms of biological role, the RuvA-RuvB-RuvC complex processes Holliday junction (HJ) DNA during genetic recombination and DNA repair, while the RuvA-RuvB complex plays an important role in the rescue of blocked DNA replication forks via replication fork reversal (RFR). RuvA specifically binds to HJ cruciform DNA, conferring on it an open structure. The RuvB hexamer acts as an ATP-dependent pump, pulling dsDNA into and through the RuvAB complex. RuvB forms 2 homohexamers on either side of HJ DNA bound by 1 or 2 RuvA tetramers; 4 subunits per hexamer contact DNA at a time. Coordinated motions by a converter formed by DNA-disengaged RuvB subunits stimulates ATP hydrolysis and nucleotide exchange. Immobilization of the converter enables RuvB to convert the ATP-contained energy into a lever motion, pulling 2 nucleotides of DNA out of the RuvA tetramer per ATP hydrolyzed, thus driving DNA branch migration. The RuvB motors rotate together with the DNA substrate, which together with the progressing nucleotide cycle form the mechanistic basis for DNA recombination by continuous HJ branch migration. Branch migration allows RuvC to scan DNA until it finds its consensus sequence, where it cleaves and resolves cruciform DNA. The protein is Holliday junction branch migration complex subunit RuvB of Bacillus licheniformis (strain ATCC 14580 / DSM 13 / JCM 2505 / CCUG 7422 / NBRC 12200 / NCIMB 9375 / NCTC 10341 / NRRL NRS-1264 / Gibson 46).